The following is a 395-amino-acid chain: Elongation factor Tu (395 aa).

The tr-type G domain occupies 6 to 205 (KPHINVGTIG…NALEKISLPT (200 aa)). The segment at 15 to 22 (GHVDHGKT) is G1. Residue 15-22 (GHVDHGKT) coordinates GTP. Thr22 serves as a coordination point for Mg(2+). The tract at residues 59-63 (GITIS) is G2. Positions 80–83 (DCPG) are G3. GTP contacts are provided by residues 80–84 (DCPGH) and 135–138 (NKCD). Residues 135 to 138 (NKCD) form a G4 region. Positions 173 to 175 (SAV) are G5.

It belongs to the TRAFAC class translation factor GTPase superfamily. Classic translation factor GTPase family. EF-Tu/EF-1A subfamily. Monomer.

The protein resides in the cytoplasm. It carries out the reaction GTP + H2O = GDP + phosphate + H(+). GTP hydrolase that promotes the GTP-dependent binding of aminoacyl-tRNA to the A-site of ribosomes during protein biosynthesis. The sequence is that of Elongation factor Tu from Ehrlichia chaffeensis (strain ATCC CRL-10679 / Arkansas).